Reading from the N-terminus, the 248-residue chain is 4-hydroxy-tetrahydrodipicolinate reductase (248 aa).

NAD(+) contacts are provided by residues 9 to 14 (GAQGRV), 77 to 79 (GTT), and 104 to 107 (APNF). The active-site Proton donor/acceptor is His-134. Residue His-135 participates in (S)-2,3,4,5-tetrahydrodipicolinate binding. The active-site Proton donor is the Lys-138. 144-145 (GT) contacts (S)-2,3,4,5-tetrahydrodipicolinate. The interval 157–176 (RREAGMPTQPDATEQSLDGA) is disordered.

It belongs to the DapB family.

It localises to the cytoplasm. It carries out the reaction (S)-2,3,4,5-tetrahydrodipicolinate + NAD(+) + H2O = (2S,4S)-4-hydroxy-2,3,4,5-tetrahydrodipicolinate + NADH + H(+). The catalysed reaction is (S)-2,3,4,5-tetrahydrodipicolinate + NADP(+) + H2O = (2S,4S)-4-hydroxy-2,3,4,5-tetrahydrodipicolinate + NADPH + H(+). Its pathway is amino-acid biosynthesis; L-lysine biosynthesis via DAP pathway; (S)-tetrahydrodipicolinate from L-aspartate: step 4/4. Catalyzes the conversion of 4-hydroxy-tetrahydrodipicolinate (HTPA) to tetrahydrodipicolinate. The sequence is that of 4-hydroxy-tetrahydrodipicolinate reductase from Corynebacterium diphtheriae (strain ATCC 700971 / NCTC 13129 / Biotype gravis).